The following is a 342-amino-acid chain: Phosphate acyltransferase (342 aa).

The protein belongs to the PlsX family. As to quaternary structure, homodimer. Probably interacts with PlsY.

It is found in the cytoplasm. The enzyme catalyses a fatty acyl-[ACP] + phosphate = an acyl phosphate + holo-[ACP]. It participates in lipid metabolism; phospholipid metabolism. Its function is as follows. Catalyzes the reversible formation of acyl-phosphate (acyl-PO(4)) from acyl-[acyl-carrier-protein] (acyl-ACP). This enzyme utilizes acyl-ACP as fatty acyl donor, but not acyl-CoA. In Shewanella putrefaciens (strain CN-32 / ATCC BAA-453), this protein is Phosphate acyltransferase.